We begin with the raw amino-acid sequence, 243 residues long: Ice-binding protein K1-A (243 aa).

Residues 1 to 20 form the signal peptide; the sequence is MFSSTYLLAIIALAVSSVFA.

This sequence belongs to the ice-binding protein family.

Its subcellular location is the secreted. Its function is as follows. Binds to the surface of ice crystals. Inhibits growth of the ice crystals. Has antifreeze activity for survival under snow cover. Has high thermal hysteresis (TH) activity, which is the ability to lower the freezing point of an aqueous solution below its melting point, and thus the freezing of the cell fluid can be prevented protecting the organism from ice damage. The TH activity of this protein is 2.0 degrees Celsius at 0.11 mM. This Typhula ishikariensis (Gray snow mold fungus) protein is Ice-binding protein K1-A.